We begin with the raw amino-acid sequence, 122 residues long: Protein translocase subunit SecE (122 aa).

3 consecutive transmembrane segments (helical) span residues 14 to 34 (LLKW…NQYF), 38 to 58 (PILY…FLAL), and 93 to 113 (LIVV…DSLL).

This sequence belongs to the SecE/SEC61-gamma family. As to quaternary structure, component of the Sec protein translocase complex. Heterotrimer consisting of SecY, SecE and SecG subunits. The heterotrimers can form oligomers, although 1 heterotrimer is thought to be able to translocate proteins. Interacts with the ribosome. Interacts with SecDF, and other proteins may be involved. Interacts with SecA.

The protein localises to the cell inner membrane. In terms of biological role, essential subunit of the Sec protein translocation channel SecYEG. Clamps together the 2 halves of SecY. May contact the channel plug during translocation. In Pseudomonas aeruginosa (strain ATCC 15692 / DSM 22644 / CIP 104116 / JCM 14847 / LMG 12228 / 1C / PRS 101 / PAO1), this protein is Protein translocase subunit SecE.